A 208-amino-acid polypeptide reads, in one-letter code: Methenyltetrahydrofolate cyclohydrolase (208 aa).

A helical transmembrane segment spans residues 25-46 (GAAAISGAMGAALVSMVCNLTI).

This sequence belongs to the cyclodeaminase/cyclohydrolase family. Homodimer.

It is found in the membrane. It carries out the reaction (6R)-5,10-methenyltetrahydrofolate + H2O = (6R)-10-formyltetrahydrofolate + H(+). It participates in one-carbon metabolism; formaldehyde assimilation via serine pathway. Its function is as follows. Required for both C1 and C2 metabolism. This is Methenyltetrahydrofolate cyclohydrolase (fchA) from Methylorubrum extorquens (strain ATCC 14718 / DSM 1338 / JCM 2805 / NCIMB 9133 / AM1) (Methylobacterium extorquens).